The following is a 1001-amino-acid chain: Serine/threonine-protein kinase TAO1 (1001 aa).

Ser-9 is modified (phosphoserine). The Protein kinase domain occupies Phe-28–Val-281. Residues Ile-34–Val-42 and Lys-57 each bind ATP. The active-site Proton acceptor is Asp-151. 2 disordered regions span residues Pro-324 to Glu-380 and Glu-404 to Arg-433. The segment covering Ser-350–Ser-370 has biased composition (low complexity). A phosphoserine mark is found at Ser-421 and Ser-445. Residues Ser-458–Met-651 adopt a coiled-coil conformation. A disordered region spans residues Lys-567–Lys-587. The segment covering Pro-577–Lys-587 has biased composition (basic and acidic residues). Thr-669 carries the post-translational modification Phosphothreonine. Positions Lys-754 to Ala-877 form a coiled coil. The tract at residues Pro-905–Thr-1001 is disordered. A compositionally biased stretch (low complexity) spans His-921–Pro-930. Phosphoserine is present on Ser-965. The segment covering Gly-975–Thr-1001 has biased composition (polar residues).

Belongs to the protein kinase superfamily. STE Ser/Thr protein kinase family. STE20 subfamily. In terms of assembly, self-associates. Interacts with MAP2K3. Interacts with SPRED1. Interacts with TESK1; the interaction inhibits TAOK1 kinase activity. Interacts with MAP3K7. In terms of processing, proteolytically processed by caspase-3 (CASP3). Autophosphorylated. Phosphorylated by ATM in response to DNA damage. Phosphorylated by LRRK2.

The protein localises to the cytoplasm. The enzyme catalyses L-seryl-[protein] + ATP = O-phospho-L-seryl-[protein] + ADP + H(+). It catalyses the reaction L-threonyl-[protein] + ATP = O-phospho-L-threonyl-[protein] + ADP + H(+). Serine/threonine-protein kinase activity is inhibited by SPRED1. In terms of biological role, serine/threonine-protein kinase involved in various processes such as p38/MAPK14 stress-activated MAPK cascade, DNA damage response and regulation of cytoskeleton stability. Phosphorylates MAP2K3, MAP2K6 and MARK2. Acts as an activator of the p38/MAPK14 stress-activated MAPK cascade by mediating phosphorylation and subsequent activation of the upstream MAP2K3 and MAP2K6 kinases. Involved in G-protein coupled receptor signaling to p38/MAPK14. In response to DNA damage, involved in the G2/M transition DNA damage checkpoint by activating the p38/MAPK14 stress-activated MAPK cascade, probably by mediating phosphorylation of MAP2K3 and MAP2K6. Acts as a regulator of cytoskeleton stability by phosphorylating 'Thr-208' of MARK2, leading to activate MARK2 kinase activity and subsequent phosphorylation and detachment of MAPT/TAU from microtubules. Also acts as a regulator of apoptosis: regulates apoptotic morphological changes, including cell contraction, membrane blebbing and apoptotic bodies formation via activation of the MAPK8/JNK cascade. During fetal development, it plays an essential role in the regulation of neuronal differentiation and migration to the cortical plate. The polypeptide is Serine/threonine-protein kinase TAO1 (Taok1) (Mus musculus (Mouse)).